A 475-amino-acid chain; its full sequence is Ribulose bisphosphate carboxylase large chain (475 aa).

Substrate is bound by residues asparagine 123 and threonine 173. Lysine 175 (proton acceptor) is an active-site residue. Position 177 (lysine 177) interacts with substrate. Lysine 201, aspartate 203, and glutamate 204 together coordinate Mg(2+). Position 201 is an N6-carboxylysine (lysine 201). The active-site Proton acceptor is histidine 294. Substrate contacts are provided by arginine 295, histidine 327, and serine 379.

The protein belongs to the RuBisCO large chain family. Type I subfamily. As to quaternary structure, heterohexadecamer of 8 large chains and 8 small chains. It depends on Mg(2+) as a cofactor.

It is found in the plastid. It localises to the chloroplast. It catalyses the reaction 2 (2R)-3-phosphoglycerate + 2 H(+) = D-ribulose 1,5-bisphosphate + CO2 + H2O. It carries out the reaction D-ribulose 1,5-bisphosphate + O2 = 2-phosphoglycolate + (2R)-3-phosphoglycerate + 2 H(+). Functionally, ruBisCO catalyzes two reactions: the carboxylation of D-ribulose 1,5-bisphosphate, the primary event in carbon dioxide fixation, as well as the oxidative fragmentation of the pentose substrate in the photorespiration process. Both reactions occur simultaneously and in competition at the same active site. This Bigelowiella natans (Pedinomonas minutissima) protein is Ribulose bisphosphate carboxylase large chain.